We begin with the raw amino-acid sequence, 495 residues long: UDP-N-acetylmuramoyl-L-alanyl-D-glutamate--2,6-diaminopimelate ligase (495 aa).

UDP-N-acetyl-alpha-D-muramoyl-L-alanyl-D-glutamate is bound by residues leucine 27, serine 29, and 44–46; that span reads HQA. 116-122 contacts ATP; sequence GTNGKTT. Residues asparagine 157, 158 to 159, serine 185, glutamine 191, and arginine 193 contribute to the UDP-N-acetyl-alpha-D-muramoyl-L-alanyl-D-glutamate site; that span reads TT. At lysine 225 the chain carries N6-carboxylysine. Residues arginine 390, 414-417, glycine 465, and glutamate 469 each bind meso-2,6-diaminopimelate; that span reads DNPR. Positions 414–417 match the Meso-diaminopimelate recognition motif motif; that stretch reads DNPR.

The protein belongs to the MurCDEF family. MurE subfamily. Mg(2+) is required as a cofactor. In terms of processing, carboxylation is probably crucial for Mg(2+) binding and, consequently, for the gamma-phosphate positioning of ATP.

It is found in the cytoplasm. It carries out the reaction UDP-N-acetyl-alpha-D-muramoyl-L-alanyl-D-glutamate + meso-2,6-diaminopimelate + ATP = UDP-N-acetyl-alpha-D-muramoyl-L-alanyl-gamma-D-glutamyl-meso-2,6-diaminopimelate + ADP + phosphate + H(+). The protein operates within cell wall biogenesis; peptidoglycan biosynthesis. Functionally, catalyzes the addition of meso-diaminopimelic acid to the nucleotide precursor UDP-N-acetylmuramoyl-L-alanyl-D-glutamate (UMAG) in the biosynthesis of bacterial cell-wall peptidoglycan. This Salmonella choleraesuis (strain SC-B67) protein is UDP-N-acetylmuramoyl-L-alanyl-D-glutamate--2,6-diaminopimelate ligase.